The chain runs to 336 residues: tRNA N6-adenosine threonylcarbamoyltransferase (336 aa).

Residues H111, H115, and Y132 each contribute to the Fe cation site. Substrate contacts are provided by residues 132-136 (YLSGG), D164, D185, and S264. D292 contributes to the Fe cation binding site.

This sequence belongs to the KAE1 / TsaD family. The cofactor is Fe(2+).

The protein resides in the cytoplasm. The catalysed reaction is L-threonylcarbamoyladenylate + adenosine(37) in tRNA = N(6)-L-threonylcarbamoyladenosine(37) in tRNA + AMP + H(+). Functionally, required for the formation of a threonylcarbamoyl group on adenosine at position 37 (t(6)A37) in tRNAs that read codons beginning with adenine. Is probably involved in the transfer of the threonylcarbamoyl moiety of threonylcarbamoyl-AMP (TC-AMP) to the N6 group of A37. The polypeptide is tRNA N6-adenosine threonylcarbamoyltransferase (Sulfurisphaera tokodaii (strain DSM 16993 / JCM 10545 / NBRC 100140 / 7) (Sulfolobus tokodaii)).